The primary structure comprises 258 residues: Synapse differentiation-inducing gene protein 1 (258 aa).

Topologically, residues 1 to 181 (MDGIIEQKSM…NFLMMPPRDH (181 aa)) are cytoplasmic. Ser-137 is modified (phosphoserine). The helical transmembrane segment at 182–202 (LGLSVFSMLCCFWPLGIAAFY) threads the bilayer. Residues 203 to 228 (LSHETNKAVAKGDLHQASTSSRRALF) lie on the Extracellular side of the membrane. The helical intramembrane region spans 229 to 249 (LAVLSITIGTGVYVGVAVALI). The Extracellular portion of the chain corresponds to 250 to 258 (AYLSKNNHL).

The protein belongs to the CD225/Dispanin family. As to quaternary structure, homodimer. Interacts with GRIA1 and GRIA2.

The protein resides in the cell membrane. Its subcellular location is the early endosome membrane. The protein localises to the postsynaptic density membrane. It localises to the synapse. It is found in the cell projection. The protein resides in the dendrite. Its subcellular location is the dendritic spine. Its function is as follows. May regulate AMPA receptor content at nascent synapses, and have a role in postsynaptic development and maturation. This chain is Synapse differentiation-inducing gene protein 1 (SYNDIG1), found in Macaca fascicularis (Crab-eating macaque).